Reading from the N-terminus, the 734-residue chain is Paralemmin-3 (734 aa).

The stretch at 19–64 forms a coiled coil; it reads SALYRQRLEVIAEKRRLQEEIGAARRELEEEKLRVERLKRKSLRER. Disordered stretches follow at residues 62-100 and 114-217; these read RERWLMDGAAEGPERPEEPASKDPQSPEGQAQARIRNLE and QSAS…LGVS. A compositionally biased stretch (basic and acidic residues) spans 73–82; it reads GPERPEEPAS. Positions 90–116 form a coiled coil; it reads GQAQARIRNLEDSLFSLQSQLQLLQSA. Serine 139, serine 158, serine 167, serine 170, and serine 172 each carry phosphoserine. Polar residues predominate over residues 186–198; that stretch reads RPSTEAIGTSSEA. Serine 270 carries the post-translational modification Phosphoserine. Residues 297-308 show a composition bias toward basic and acidic residues; sequence DVTGESGRDAEA. 3 disordered regions span residues 297-347, 374-400, and 413-709; these read DVTG…PGVE, PQGAGSAGEPEALIGAQPRGGEASWEV, and EKGR…YAPA. Phosphothreonine is present on threonine 311. Residues 315-336 are compositionally biased toward basic and acidic residues; that stretch reads RLQEQFEAETCRKEEGASRDSL. Phosphoserine occurs at positions 332 and 335. 8 stretches are compositionally biased toward basic and acidic residues: residues 413–427, 435–452, 462–484, 494–531, 540–561, 571–582, 589–607, and 630–647; these read EKGRAEKLGAEREDG, TQGREENEAEKVERKDSE, DEEKWEVKTTEGEESLEVEKGGE, LVTEKKPEGSLETERKGSEMPLDQEKDGEGSLDRESKT, IGDKSSLDETKGSKKLLDEKTG, EGSKKLLDREAD, EVDKTSGAKDDVSPEEQGK, and DEPRSEEQGQQEPEKQEG. A Phosphoserine modification is found at serine 451. Position 601 is a phosphoserine (serine 601). A Phosphoserine modification is found at serine 721. S-palmitoyl cysteine attachment occurs at residues cysteine 728 and cysteine 730. The residue at position 731 (cysteine 731) is a Cysteine methyl ester. A lipid anchor (S-farnesyl cysteine) is attached at cysteine 731. Positions 732–734 are cleaved as a propeptide — removed in mature form; sequence VVM.

This sequence belongs to the paralemmin family. Interacts with SIGIRR. In terms of processing, palmitoylated on Cys-728 and Cys-730 and prenylated on Cys-731; which is required for membrane association.

It is found in the cytoplasm. Its subcellular location is the cell membrane. Functionally, ATP-binding protein, which may act as a adapter in the Toll-like receptor (TLR) signaling. This chain is Paralemmin-3 (Palm3), found in Mus musculus (Mouse).